We begin with the raw amino-acid sequence, 624 residues long: Elongation factor 4 (624 aa).

The region spanning 17–203 (ALIRNFCIIA…RVVRDVPAPV (187 aa)) is the tr-type G domain. GTP is bound by residues 29-34 (DHGKST) and 150-153 (NKID).

This sequence belongs to the TRAFAC class translation factor GTPase superfamily. Classic translation factor GTPase family. LepA subfamily.

Its subcellular location is the cell membrane. It carries out the reaction GTP + H2O = GDP + phosphate + H(+). Its function is as follows. Required for accurate and efficient protein synthesis under certain stress conditions. May act as a fidelity factor of the translation reaction, by catalyzing a one-codon backward translocation of tRNAs on improperly translocated ribosomes. Back-translocation proceeds from a post-translocation (POST) complex to a pre-translocation (PRE) complex, thus giving elongation factor G a second chance to translocate the tRNAs correctly. Binds to ribosomes in a GTP-dependent manner. The protein is Elongation factor 4 of Streptomyces griseus subsp. griseus (strain JCM 4626 / CBS 651.72 / NBRC 13350 / KCC S-0626 / ISP 5235).